Here is a 593-residue protein sequence, read N- to C-terminus: Monoterpene synthase 7, chloroplastic (593 aa).

The transit peptide at Met1 to Gln39 directs the protein to the chloroplast. Asp348, Asp352, Asp491, and Glu499 together coordinate Mg(2+). A DDXXD motif motif is present at residues Asp348 to Asp352.

It belongs to the terpene synthase family. Tpsa subfamily. Mg(2+) is required as a cofactor. It depends on Mn(2+) as a cofactor. As to expression, highly expressed in flowers, petals and sepals, but almost undetectable in vegetative organs.

Its subcellular location is the plastid. It is found in the chloroplast. It carries out the reaction (2E)-geranyl diphosphate = sabinene + diphosphate. The enzyme catalyses (2E)-geranyl diphosphate = terpinolene + diphosphate. The catalysed reaction is (2E)-geranyl diphosphate = alpha-pinene + diphosphate. It catalyses the reaction (2E)-geranyl diphosphate = beta-pinene + diphosphate. It carries out the reaction (2E)-geranyl diphosphate = beta-myrcene + diphosphate. The enzyme catalyses (2E)-geranyl diphosphate = alpha-terpinene + diphosphate. The catalysed reaction is (2E)-geranyl diphosphate = beta-phellandrene + diphosphate. It catalyses the reaction (2E)-geranyl diphosphate = gamma-terpinene + diphosphate. Its pathway is secondary metabolite biosynthesis; terpenoid biosynthesis. In terms of biological role, monoterpene synthase involved in the biosynthesis of volatile compounds present in floral scent. Mediates the conversion of (2E)-geranyl diphosphate (GPP) into sabinene and sub-products such as alpha-thujene, alpha-pinene, beta-pinene, myrcene, alpha-phellandrene, alpha-terpinene, beta-phellandrene, gamma-terpinene and terpinolene. Unable to use farnesyl diphosphate (FPP) as substrate. This Hedychium coronarium (White butterfly ginger-lily) protein is Monoterpene synthase 7, chloroplastic.